Reading from the N-terminus, the 137-residue chain is MMQPKKTKFRKAHKGRIHGVASSGATLAFGQFGLKAMEPERVTARQIEAARRALTRHMKRAGRVWIRIFPDVPVSKKPAEVRMGSGKGAPELWVARVKPGRVMFEIDGVNQQIAREALTLAAAKLPIKTRFVARIAE.

Belongs to the universal ribosomal protein uL16 family. As to quaternary structure, part of the 50S ribosomal subunit.

In terms of biological role, binds 23S rRNA and is also seen to make contacts with the A and possibly P site tRNAs. This Rhodopseudomonas palustris (strain BisB5) protein is Large ribosomal subunit protein uL16.